The following is a 309-amino-acid chain: Isopentenyl-diphosphate Delta-isomerase II (309 aa).

Lys112 is a substrate binding site. Residues His116 and His128 each contribute to the Mg(2+) site. Positions 126-278 constitute a Nudix hydrolase domain; sequence LLHRAFSVFL…GLKLSPWFRL (153 aa). The substrate site is built by Arg147 and Lys151. Residue Cys163 is part of the active site. Ser164 contacts substrate. Glu223 and Glu225 together coordinate Mg(2+). Glu225 is an active-site residue.

The protein belongs to the IPP isomerase type 1 family. Mg(2+) is required as a cofactor.

The catalysed reaction is isopentenyl diphosphate = dimethylallyl diphosphate. It functions in the pathway isoprenoid biosynthesis; dimethylallyl diphosphate biosynthesis; dimethylallyl diphosphate from isopentenyl diphosphate: step 1/1. It participates in porphyrin-containing compound metabolism; chlorophyll biosynthesis. Functionally, catalyzes the 1,3-allylic rearrangement of the homoallylic substrate isopentenyl (IPP) to its highly electrophilic allylic isomer, dimethylallyl diphosphate (DMAPP). This chain is Isopentenyl-diphosphate Delta-isomerase II (IPI2), found in Camptotheca acuminata (Happy tree).